Here is a 960-residue protein sequence, read N- to C-terminus: UPF0182 protein DSY1630 (960 aa).

A run of 7 helical transmembrane segments spans residues 7–27 (IMLVLLGIGLILFIALSGLFE), 50–70 (IIQIINGTILFTFIAGTLFSI), 105–125 (TLWLIIISVLISFGVSFVTGF), 169–189 (FGPLFFLTFFTIVFYSFAGVI), 212–232 (LALLITVLFLFKGFGCYFDTF), 256–276 (ALKALLVLCALGVIGGGLAFF), and 285–305 (LPILAIFISIPLLSGLGPMVL). Disordered regions lie at residues 866–899 (SALAVSPMSAELKPEETEETTEETEEPVDPQEDT) and 924–960 (TGDSVDVEGGKKADEDAHDVQTDPEGSVSSEQSKTNP). Residues 881–897 (ETEETTEETEEPVDPQE) are compositionally biased toward acidic residues. Over residues 931–944 (EGGKKADEDAHDVQ) the composition is skewed to basic and acidic residues. A compositionally biased stretch (polar residues) spans 950 to 960 (SVSSEQSKTNP).

This sequence belongs to the UPF0182 family.

It is found in the cell membrane. The polypeptide is UPF0182 protein DSY1630 (Desulfitobacterium hafniense (strain Y51)).